We begin with the raw amino-acid sequence, 284 residues long: Pantothenate synthetase (284 aa).

Residue 30–37 participates in ATP binding; the sequence is MGNLHDGH. Residue H37 is the Proton donor of the active site. Q61 is a (R)-pantoate binding site. Q61 contributes to the beta-alanine binding site. 149-152 contacts ATP; that stretch reads GEKD. Residue Q155 coordinates (R)-pantoate. ATP is bound by residues V178 and 186-189; that span reads LSSR.

Belongs to the pantothenate synthetase family. As to quaternary structure, homodimer.

The protein localises to the cytoplasm. It catalyses the reaction (R)-pantoate + beta-alanine + ATP = (R)-pantothenate + AMP + diphosphate + H(+). It functions in the pathway cofactor biosynthesis; (R)-pantothenate biosynthesis; (R)-pantothenate from (R)-pantoate and beta-alanine: step 1/1. Functionally, catalyzes the condensation of pantoate with beta-alanine in an ATP-dependent reaction via a pantoyl-adenylate intermediate. In Erwinia tasmaniensis (strain DSM 17950 / CFBP 7177 / CIP 109463 / NCPPB 4357 / Et1/99), this protein is Pantothenate synthetase.